Here is a 163-residue protein sequence, read N- to C-terminus: Fatty acid-binding protein homolog (163 aa).

The signal sequence occupies residues 1-23 (MRCLVALILTVLIVTPEVEAKTL).

The protein belongs to the calycin superfamily. Fatty-acid binding protein (FABP) family. Abundant in the fluid surrounding the developing embryo of Ascaris suum.

Functionally, may play a role in sequestering potentially toxic fatty acids and their peroxidation products, or it may be involved in the maintenance of the impermeable lipid layer of the eggshell. The polypeptide is Fatty acid-binding protein homolog (Ascaris suum (Pig roundworm)).